The sequence spans 336 residues: tRNA N6-adenosine threonylcarbamoyltransferase (336 aa).

2 residues coordinate Fe cation: His-114 and His-118. Residues 136–140 (LVSGG), Asp-169, Gly-182, Asp-186, and Asn-275 contribute to the substrate site. Asp-301 serves as a coordination point for Fe cation.

The protein belongs to the KAE1 / TsaD family. It depends on Fe(2+) as a cofactor.

Its subcellular location is the cytoplasm. It catalyses the reaction L-threonylcarbamoyladenylate + adenosine(37) in tRNA = N(6)-L-threonylcarbamoyladenosine(37) in tRNA + AMP + H(+). Its function is as follows. Required for the formation of a threonylcarbamoyl group on adenosine at position 37 (t(6)A37) in tRNAs that read codons beginning with adenine. Is involved in the transfer of the threonylcarbamoyl moiety of threonylcarbamoyl-AMP (TC-AMP) to the N6 group of A37, together with TsaE and TsaB. TsaD likely plays a direct catalytic role in this reaction. This Streptococcus pneumoniae (strain CGSP14) protein is tRNA N6-adenosine threonylcarbamoyltransferase.